A 332-amino-acid chain; its full sequence is Phenylalanine--tRNA ligase alpha subunit (332 aa).

Glutamate 252 serves as a coordination point for Mg(2+).

This sequence belongs to the class-II aminoacyl-tRNA synthetase family. Phe-tRNA synthetase alpha subunit type 1 subfamily. As to quaternary structure, tetramer of two alpha and two beta subunits. Requires Mg(2+) as cofactor.

Its subcellular location is the cytoplasm. It carries out the reaction tRNA(Phe) + L-phenylalanine + ATP = L-phenylalanyl-tRNA(Phe) + AMP + diphosphate + H(+). The polypeptide is Phenylalanine--tRNA ligase alpha subunit (Marinobacter nauticus (strain ATCC 700491 / DSM 11845 / VT8) (Marinobacter aquaeolei)).